We begin with the raw amino-acid sequence, 591 residues long: CTP synthase 1-A (591 aa).

One can recognise a Glutamine amidotransferase type-1 domain in the interval 300 to 554 (SIALVGKYTK…LASVGRLSQY (255 aa)). Catalysis depends on for GATase activity residues cysteine 399, histidine 526, and glutamate 528.

Belongs to the CTP synthase family.

It carries out the reaction UTP + L-glutamine + ATP + H2O = CTP + L-glutamate + ADP + phosphate + 2 H(+). The protein operates within pyrimidine metabolism; CTP biosynthesis via de novo pathway; CTP from UDP: step 2/2. Functionally, this enzyme is involved in the de novo synthesis of CTP, a precursor of DNA, RNA and phospholipids. Catalyzes the ATP-dependent amination of UTP to CTP with either L-glutamine or ammonia as a source of nitrogen. In Xenopus laevis (African clawed frog), this protein is CTP synthase 1-A (ctps1-a).